The sequence spans 477 residues: MQVTETLNEGLKREIKVVVPAGDLEAKLAERLETARGRARINGFRPGKVPTAHLRKMYGKSFMAEIVNEILNDSSRSILAERNEKSATQPEVIMSEDEKEAEKVLDGKADFVFSLNYEVLPAIEVKDFSKIAVTREVVDISDEEVDEQVKRIASSTRTFETKKGKAENEDRVTIDYLGKLDGEPFEGGADNDAQLVLGSGQFIPGFEEQLIGLKAGDEKVITVTFPAEYGAAHLAGKEATFDIKVKEVAKPNELVLDDETAKKLGIESLERLRQVVREQIESQYGQITRQKVKRQILDALDGDYQFETPQKLVDAEFNNIWQQINFDLQQAGRTFEDEETTEEAAREEYRKLAERRVRLGLVLSEIGEKAGVEVTEEELQRAVYDQVRRYPGQEKEIYDFLRRTPDAVANLRAPIFEEKVVDHLLANINVTDKKVSKEELTAEDEDAASEAKPAKKAAAKKKAAPKKKAEEGKSEEA.

Positions 169–254 (EDRVTIDYLG…VKEVAKPNEL (86 aa)) constitute a PPIase FKBP-type domain. The segment at 435 to 477 (VSKEELTAEDEDAASEAKPAKKAAAKKKAAPKKKAEEGKSEEA) is disordered. Basic residues predominate over residues 454 to 466 (AKKAAAKKKAAPK). Positions 467–477 (KKAEEGKSEEA) are enriched in basic and acidic residues.

It belongs to the FKBP-type PPIase family. Tig subfamily.

The protein resides in the cytoplasm. The catalysed reaction is [protein]-peptidylproline (omega=180) = [protein]-peptidylproline (omega=0). Its function is as follows. Involved in protein export. Acts as a chaperone by maintaining the newly synthesized protein in an open conformation. Functions as a peptidyl-prolyl cis-trans isomerase. In Brucella melitensis biotype 1 (strain ATCC 23456 / CCUG 17765 / NCTC 10094 / 16M), this protein is Trigger factor (tig).